The sequence spans 490 residues: MTSMTATNAQPFTIVNVPEMRRVQRIHFVGIGGAGMAGIAEVLLNQGYQISGSDIAENANTERLRCLGATVVLGHMANNIEGASVVVVSSAIKADNAELVAAHQLRVPVVRRAEMLAELMRFRHGIAVAGTHGKTTTTSLVASIFAEAGRDPTFVIGGLLNSAGSNARLGNSKYLIAEADESDASFLHLQPMVAIVTNIEADHMDTYEGDFNKLLDTYVEFLHNLPFYGLAVMCVDDPVVSDLIPRLGRQTMTYGFSEAADVRAIDYKQTASESCFTILRKGLKPLDVCLNLPGKHNVLNALAAVAVATDEGINDEAIKSALNKFEGIGRRFQHYGNFAISDKDSNKEPGEVMLVDDYGHHPSEVAATIQAAREGWPERRLVMAFQPHRYSRTRDLYEDFVNVLSQVDVLLMLEVYSAGETPVSGADSRSLCRSIRQRGQIDPVYVATVDDMPEVLESVLAPGDLLLTQGAGNIGALAKRIATEVLSHES.

Residue 130 to 136 (GTHGKTT) coordinates ATP.

It belongs to the MurCDEF family.

It localises to the cytoplasm. The catalysed reaction is UDP-N-acetyl-alpha-D-muramate + L-alanine + ATP = UDP-N-acetyl-alpha-D-muramoyl-L-alanine + ADP + phosphate + H(+). Its pathway is cell wall biogenesis; peptidoglycan biosynthesis. Its function is as follows. Cell wall formation. The protein is UDP-N-acetylmuramate--L-alanine ligase of Idiomarina loihiensis (strain ATCC BAA-735 / DSM 15497 / L2-TR).